The chain runs to 397 residues: Exodeoxyribonuclease 7 large subunit (397 aa).

The protein belongs to the XseA family. In terms of assembly, heterooligomer composed of large and small subunits.

The protein localises to the cytoplasm. It catalyses the reaction Exonucleolytic cleavage in either 5'- to 3'- or 3'- to 5'-direction to yield nucleoside 5'-phosphates.. Functionally, bidirectionally degrades single-stranded DNA into large acid-insoluble oligonucleotides, which are then degraded further into small acid-soluble oligonucleotides. The protein is Exodeoxyribonuclease 7 large subunit of Anaplasma marginale (strain St. Maries).